A 172-amino-acid polypeptide reads, in one-letter code: Large ribosomal subunit protein uL10 (172 aa).

Belongs to the universal ribosomal protein uL10 family. As to quaternary structure, part of the ribosomal stalk of the 50S ribosomal subunit. The N-terminus interacts with L11 and the large rRNA to form the base of the stalk. The C-terminus forms an elongated spine to which L12 dimers bind in a sequential fashion forming a multimeric L10(L12)X complex.

In terms of biological role, forms part of the ribosomal stalk, playing a central role in the interaction of the ribosome with GTP-bound translation factors. The sequence is that of Large ribosomal subunit protein uL10 from Rhizobium etli (strain CIAT 652).